The following is a 163-amino-acid chain: Large ribosomal subunit protein uL10 (163 aa).

Belongs to the universal ribosomal protein uL10 family. In terms of assembly, part of the ribosomal stalk of the 50S ribosomal subunit. The N-terminus interacts with L11 and the large rRNA to form the base of the stalk. The C-terminus forms an elongated spine to which L12 dimers bind in a sequential fashion forming a multimeric L10(L12)X complex.

Its function is as follows. Forms part of the ribosomal stalk, playing a central role in the interaction of the ribosome with GTP-bound translation factors. This Haemophilus influenzae (strain 86-028NP) protein is Large ribosomal subunit protein uL10.